Here is a 128-residue protein sequence, read N- to C-terminus: Putative transmembrane protein 244 (128 aa).

3 helical membrane passes run 17–37 (FLLCVILFYTVYYVSLSMGCV), 65–85 (VLLVSTEVTYFVCGLFFVPVV), and 93–113 (AISVTILHVAITSTVMLEFPL).

Its subcellular location is the membrane. The protein is Putative transmembrane protein 244 (TMEM244) of Homo sapiens (Human).